Reading from the N-terminus, the 481-residue chain is UDP-N-acetylmuramoyl-L-alanyl-D-glutamate--L-lysine ligase (481 aa).

Residue Ser42 participates in UDP-N-acetyl-alpha-D-muramoyl-L-alanyl-D-glutamate binding. 118–124 (GTKGKTT) is a binding site for ATP. UDP-N-acetyl-alpha-D-muramoyl-L-alanyl-D-glutamate contacts are provided by residues Asn158, 160-161 (TT), Ser187, and Arg195. An N6-carboxylysine modification is found at Lys229. The L-lysine recognition motif signature appears at 404–407 (DDPN).

The protein belongs to the MurCDEF family. MurE subfamily. In terms of processing, carboxylation is probably crucial for Mg(2+) binding and, consequently, for the gamma-phosphate positioning of ATP.

The protein localises to the cytoplasm. It carries out the reaction UDP-N-acetyl-alpha-D-muramoyl-L-alanyl-D-glutamate + L-lysine + ATP = UDP-N-acetyl-alpha-D-muramoyl-L-alanyl-gamma-D-glutamyl-L-lysine + ADP + phosphate + H(+). It participates in cell wall biogenesis; peptidoglycan biosynthesis. In terms of biological role, catalyzes the addition of L-lysine to the nucleotide precursor UDP-N-acetylmuramoyl-L-alanyl-D-glutamate (UMAG) in the biosynthesis of bacterial cell-wall peptidoglycan. The polypeptide is UDP-N-acetylmuramoyl-L-alanyl-D-glutamate--L-lysine ligase (Streptococcus thermophilus (strain ATCC BAA-491 / LMD-9)).